The sequence spans 185 residues: Ribosome-recycling factor (185 aa).

It belongs to the RRF family.

The protein localises to the cytoplasm. Functionally, responsible for the release of ribosomes from messenger RNA at the termination of protein biosynthesis. May increase the efficiency of translation by recycling ribosomes from one round of translation to another. In Macrococcus caseolyticus (strain JCSC5402) (Macrococcoides caseolyticum), this protein is Ribosome-recycling factor.